A 61-amino-acid chain; its full sequence is Metallothionein-1B (61 aa).

Positions 1 to 29 (MDPNCSCPTSGSCSCAGSCTCKACRCPSC) are beta. A divalent metal cation contacts are provided by Cys-5, Cys-7, Cys-13, Cys-15, Cys-19, Cys-21, Cys-24, Cys-26, Cys-29, Cys-33, Cys-34, Cys-36, Cys-37, Cys-41, Cys-44, Cys-48, Cys-50, Cys-57, Cys-59, and Cys-60. The alpha stretch occupies residues 30–61 (KKSCCSCCPVGCAKCAQGCVCKGASDKCSCCA).

Belongs to the metallothionein superfamily. Type 1 family.

In terms of biological role, metallothioneins have a high content of cysteine residues that bind various heavy metals; these proteins are transcriptionally regulated by both heavy metals and glucocorticoids. This is Metallothionein-1B (MT1B) from Ovis aries (Sheep).